Here is a 117-residue protein sequence, read N- to C-terminus: Ribosome-binding factor A (117 aa).

This sequence belongs to the RbfA family. As to quaternary structure, monomer. Binds 30S ribosomal subunits, but not 50S ribosomal subunits or 70S ribosomes.

Its subcellular location is the cytoplasm. Functionally, one of several proteins that assist in the late maturation steps of the functional core of the 30S ribosomal subunit. Associates with free 30S ribosomal subunits (but not with 30S subunits that are part of 70S ribosomes or polysomes). Required for efficient processing of 16S rRNA. May interact with the 5'-terminal helix region of 16S rRNA. This Bacillus subtilis (strain 168) protein is Ribosome-binding factor A.